A 137-amino-acid chain; its full sequence is Protein cornichon homolog 4 (137 aa).

Transmembrane regions (helical) follow at residues 8–28, 53–73, and 113–133; these read LISF…LVCL, FIVQ…FMTL, and LAYI…SALD.

This sequence belongs to the cornichon family.

It is found in the membrane. The polypeptide is Protein cornichon homolog 4 (Arabidopsis thaliana (Mouse-ear cress)).